The following is a 419-amino-acid chain: tRNA(Ile)-lysidine synthase (419 aa).

Residue 31–36 (SGGGDS) coordinates ATP.

Belongs to the tRNA(Ile)-lysidine synthase family.

The protein localises to the cytoplasm. The enzyme catalyses cytidine(34) in tRNA(Ile2) + L-lysine + ATP = lysidine(34) in tRNA(Ile2) + AMP + diphosphate + H(+). Its function is as follows. Ligates lysine onto the cytidine present at position 34 of the AUA codon-specific tRNA(Ile) that contains the anticodon CAU, in an ATP-dependent manner. Cytidine is converted to lysidine, thus changing the amino acid specificity of the tRNA from methionine to isoleucine. This Ruegeria pomeroyi (strain ATCC 700808 / DSM 15171 / DSS-3) (Silicibacter pomeroyi) protein is tRNA(Ile)-lysidine synthase.